Consider the following 259-residue polypeptide: Protein odd-skipped-related 1 (259 aa).

C2H2-type zinc fingers lie at residues 168-190, 196-218, and 224-246; these read FVCKFCGRHFTKSYNLLIHERTH, YTCDICHKAFRRQDHLRDHRYIH, and FKCQECGKGFCQSRTLAVHKTLH.

Belongs to the Odd C2H2-type zinc-finger protein family.

Its subcellular location is the nucleus. Functionally, transcriptional repressor. Required for pronephric kidney development. This Xenopus tropicalis (Western clawed frog) protein is Protein odd-skipped-related 1.